The primary structure comprises 79 residues: DNA-directed RNA polymerase subunit omega (79 aa).

It belongs to the RNA polymerase subunit omega family. In terms of assembly, the RNAP catalytic core consists of 2 alpha, 1 beta, 1 beta' and 1 omega subunit. When a sigma factor is associated with the core the holoenzyme is formed, which can initiate transcription.

The catalysed reaction is RNA(n) + a ribonucleoside 5'-triphosphate = RNA(n+1) + diphosphate. Its function is as follows. Promotes RNA polymerase assembly. Latches the N- and C-terminal regions of the beta' subunit thereby facilitating its interaction with the beta and alpha subunits. The polypeptide is DNA-directed RNA polymerase subunit omega (Thermotoga neapolitana (strain ATCC 49049 / DSM 4359 / NBRC 107923 / NS-E)).